The chain runs to 420 residues: Glyceraldehyde-3-phosphate dehydrogenase GAPCP2, chloroplastic (420 aa).

The transit peptide at 1-66 directs the protein to the chloroplast; that stretch reads MALSSLLRSA…YNAKRVQPIK (66 aa). Residues 94 to 95, aspartate 116, and arginine 162 contribute to the NAD(+) site; that span reads RI. D-glyceraldehyde 3-phosphate-binding positions include 233-235, threonine 264, 293-294, and arginine 316; these read SCT and TG. The active-site Nucleophile is the cysteine 234. Asparagine 398 serves as a coordination point for NAD(+).

Belongs to the glyceraldehyde-3-phosphate dehydrogenase family. As to quaternary structure, homotetramer. In terms of tissue distribution, expressed in shoot and root vasculature, leaf veins and vascular tissue of flowers and siliques.

It localises to the plastid. Its subcellular location is the chloroplast stroma. It catalyses the reaction D-glyceraldehyde 3-phosphate + phosphate + NAD(+) = (2R)-3-phospho-glyceroyl phosphate + NADH + H(+). Involved in plastidial glycolytic pathway and plays a specific role in glycolytic energy production in non-green plastids and chloroplasts. Essential for breakdown of starch to form sucrose for export to non-photosynthetic tissues, and to generate primary metabolites for anabolic pathways such as fatty acid and amino acid synthesis. Plays an important role in plant development by providing substrates for the phosphorylated pathway of serine biosynthesis in roots. Plays a crucial role in pollen development. Functionally redundant with GAPCP1. The protein is Glyceraldehyde-3-phosphate dehydrogenase GAPCP2, chloroplastic (GAPCP2) of Arabidopsis thaliana (Mouse-ear cress).